A 236-amino-acid chain; its full sequence is Rab-like protein 3 (236 aa).

The segment at 1–236 (MASLDRVKVL…AGTLKSLHYD (236 aa)) is small GTPase-like. GTP-binding positions include 16 to 21 (GVGKSS), 148 to 150 (KLD), and 179 to 180 (DC).

The protein belongs to the small GTPase superfamily. Rab family. Homodimer. Interacts with GPR89; the interaction stabilizes GPR89. Interacts with RAP1GDS1.

Its function is as follows. Required for KRAS signaling regulation and modulation of cell proliferation. Regulator of KRAS prenylation, and probably prenylation of other small GTPases. Required for lymphocyte development and function. Not required for myeloid cell development. The chain is Rab-like protein 3 (RABL3) from Homo sapiens (Human).